We begin with the raw amino-acid sequence, 256 residues long: Thiazole synthase (256 aa).

The active-site Schiff-base intermediate with DXP is the lysine 96. Residues glycine 157, 184–185 (AG), and 206–207 (NT) contribute to the 1-deoxy-D-xylulose 5-phosphate site.

It belongs to the ThiG family. Homotetramer. Forms heterodimers with either ThiH or ThiS.

It localises to the cytoplasm. It catalyses the reaction [ThiS sulfur-carrier protein]-C-terminal-Gly-aminoethanethioate + 2-iminoacetate + 1-deoxy-D-xylulose 5-phosphate = [ThiS sulfur-carrier protein]-C-terminal Gly-Gly + 2-[(2R,5Z)-2-carboxy-4-methylthiazol-5(2H)-ylidene]ethyl phosphate + 2 H2O + H(+). Its pathway is cofactor biosynthesis; thiamine diphosphate biosynthesis. Functionally, catalyzes the rearrangement of 1-deoxy-D-xylulose 5-phosphate (DXP) to produce the thiazole phosphate moiety of thiamine. Sulfur is provided by the thiocarboxylate moiety of the carrier protein ThiS. In vitro, sulfur can be provided by H(2)S. In Brucella anthropi (strain ATCC 49188 / DSM 6882 / CCUG 24695 / JCM 21032 / LMG 3331 / NBRC 15819 / NCTC 12168 / Alc 37) (Ochrobactrum anthropi), this protein is Thiazole synthase.